A 261-amino-acid chain; its full sequence is Esterase citA (261 aa).

Active-site charge relay system residues include Ser122, Asp207, and His235.

It belongs to the LovG family.

It functions in the pathway mycotoxin biosynthesis. Its function is as follows. Non-reducing polyketide synthase; part of the gene cluster that mediates the biosynthesis of the mycotoxin citrinin, a hepato-nephrotoxic compound to humans due to inhibition of respiration complex III. The pathway begins with the synthesis of a keto-aldehyde intermediate by the citrinin PKS (pksCT also named citS) from successive condensations of 4 malonyl-CoA units, presumably with a simple acetyl-CoA starter unit. Release of the keto-aldehyde intermediate is consistent with the presence of the C-terminal reductive release domain. CitA collaborates with citS by catalyzing the hydrolysis of ACP-bound acyl intermediates to free the ACP from stalled intermediates. CitB then catalyzes the oxidation of the C-12 methyl of the ketone intermediate to an alcohol intermediate which is further oxidized by the oxidoreductase citC to produce a bisaldehyde intermediate. The fourth catalytic step is catalyzed by the citD aldehyde dehydrogenase. The final transformation is the reduction of C-3 by citE to provide the chemically stable citrinin nucleus. CitE appears highly selective for its substrate as its presence in any context other than a full complement of citS and citA-D does not result in observable new compounds. This is Esterase citA from Monascus ruber (Mold).